Reading from the N-terminus, the 203-residue chain is Auxin-induced protein 22E (203 aa).

The EAR-like (transcriptional repression) signature appears at 15–19 (LRLGL). The interval 15–77 (LRLGLPGSDE…DHNEDSVQPA (63 aa)) is disordered. Residues 43 to 52 (SSPELEESRC) are compositionally biased toward basic and acidic residues. The span at 58-67 (SDSSDSTTTS) shows a compositional bias: low complexity. A PB1 domain is found at 107–199 (GMYLKVSMAG…RIIKGSEAKG (93 aa)).

Belongs to the Aux/IAA family. Homodimers and heterodimers.

Its subcellular location is the nucleus. Its function is as follows. Aux/IAA proteins are short-lived transcriptional factors that function as repressors of early auxin response genes at low auxin concentrations. Repression is thought to result from the interaction with auxin response factors (ARFs), proteins that bind to the auxin-responsive promoter element (AuxRE). Formation of heterodimers with ARF proteins may alter their ability to modulate early auxin response genes expression. The polypeptide is Auxin-induced protein 22E (AUX22E) (Vigna radiata var. radiata (Mung bean)).